A 298-amino-acid chain; its full sequence is Craniofacial development protein 1 (298 aa).

Composition is skewed to acidic residues over residues 1–18, 25–43, and 70–80; these read MEEF…DEDY, YSED…DGEE, and LEEEGEEDANE. Disordered stretches follow at residues 1–158 and 191–223; these read MEEF…KPQE and FFKQ…SSGM. A phosphoserine mark is found at serine 82, serine 85, and serine 86. Basic and acidic residues predominate over residues 98–112; it reads KGIESEDARKKKEDE. A Phosphoserine modification is found at serine 116. Basic and acidic residues-rich tracts occupy residues 148–158 and 191–200; these read VKAEKLEKPQE and FFKQNEKEKP. A Glycyl lysine isopeptide (Lys-Gly) (interchain with G-Cter in SUMO2) cross-link involves residue lysine 149. Residues 177–216 form a hydrophilic region; it reads VIKEVDATSKEAKSFFKQNEKEKPQSNISSSVPSLSAGSG. The segment covering 205 to 217 has biased composition (low complexity); it reads SSSVPSLSAGSGL. The residue at position 215 (serine 215) is a Phosphoserine. In terms of domain architecture, BCNT-C spans 217 to 298; that stretch reads LKRSSGMSSL…RDLRLSQMKP (82 aa). N6-methyllysine is present on lysine 218. Serine 249 is subject to Phosphoserine.

The protein resides in the chromosome. It is found in the centromere. Its subcellular location is the kinetochore. May play a role during embryogenesis. The sequence is that of Craniofacial development protein 1 (CFDP1) from Muntiacus reevesi (Reeves' muntjac).